Reading from the N-terminus, the 426-residue chain is UDP-N-acetylglucosamine 1-carboxyvinyltransferase (426 aa).

23–24 contacts phosphoenolpyruvate; that stretch reads KN. Arg-99 contacts UDP-N-acetyl-alpha-D-glucosamine. Catalysis depends on Asp-123, which acts as the Proton donor. Asp-311 and Ile-333 together coordinate UDP-N-acetyl-alpha-D-glucosamine.

Belongs to the EPSP synthase family. MurA subfamily.

It is found in the cytoplasm. The catalysed reaction is phosphoenolpyruvate + UDP-N-acetyl-alpha-D-glucosamine = UDP-N-acetyl-3-O-(1-carboxyvinyl)-alpha-D-glucosamine + phosphate. It participates in cell wall biogenesis; peptidoglycan biosynthesis. Functionally, cell wall formation. Adds enolpyruvyl to UDP-N-acetylglucosamine. This is UDP-N-acetylglucosamine 1-carboxyvinyltransferase from Nocardia farcinica (strain IFM 10152).